The following is a 157-amino-acid chain: Transcription elongation factor GreA (157 aa).

Positions 1–75 form a coiled coil; that stretch reads MSKEIILTQE…VETLINRAKV (75 aa).

It belongs to the GreA/GreB family.

In terms of biological role, necessary for efficient RNA polymerase transcription elongation past template-encoded arresting sites. The arresting sites in DNA have the property of trapping a certain fraction of elongating RNA polymerases that pass through, resulting in locked ternary complexes. Cleavage of the nascent transcript by cleavage factors such as GreA or GreB allows the resumption of elongation from the new 3'terminus. GreA releases sequences of 2 to 3 nucleotides. This Mycoplasma capricolum subsp. capricolum (strain California kid / ATCC 27343 / NCTC 10154) protein is Transcription elongation factor GreA.